Reading from the N-terminus, the 402-residue chain is S-adenosylmethionine synthase (402 aa).

Residue 137–142 (GQGSAD) coordinates ATP.

Belongs to the AdoMet synthase 2 family. The cofactor is Mg(2+).

It carries out the reaction L-methionine + ATP + H2O = S-adenosyl-L-methionine + phosphate + diphosphate. It functions in the pathway amino-acid biosynthesis; S-adenosyl-L-methionine biosynthesis; S-adenosyl-L-methionine from L-methionine: step 1/1. Functionally, catalyzes the formation of S-adenosylmethionine from methionine and ATP. This Pyrobaculum aerophilum (strain ATCC 51768 / DSM 7523 / JCM 9630 / CIP 104966 / NBRC 100827 / IM2) protein is S-adenosylmethionine synthase.